A 408-amino-acid polypeptide reads, in one-letter code: LL-diaminopimelate aminotransferase (408 aa).

Tyrosine 15 and glycine 42 together coordinate substrate. Residues tyrosine 72, 108-109 (SK), tyrosine 132, asparagine 187, tyrosine 218, and 246-248 (SFS) each bind pyridoxal 5'-phosphate. The substrate site is built by lysine 109, tyrosine 132, and asparagine 187. Lysine 249 carries the N6-(pyridoxal phosphate)lysine modification. Pyridoxal 5'-phosphate contacts are provided by arginine 257 and asparagine 292. Residues asparagine 292 and arginine 388 each coordinate substrate.

This sequence belongs to the class-I pyridoxal-phosphate-dependent aminotransferase family. LL-diaminopimelate aminotransferase subfamily. Homodimer. The cofactor is pyridoxal 5'-phosphate.

It carries out the reaction (2S,6S)-2,6-diaminopimelate + 2-oxoglutarate = (S)-2,3,4,5-tetrahydrodipicolinate + L-glutamate + H2O + H(+). It functions in the pathway amino-acid biosynthesis; L-lysine biosynthesis via DAP pathway; LL-2,6-diaminopimelate from (S)-tetrahydrodipicolinate (aminotransferase route): step 1/1. Involved in the synthesis of meso-diaminopimelate (m-DAP or DL-DAP), required for both lysine and peptidoglycan biosynthesis. Catalyzes the direct conversion of tetrahydrodipicolinate to LL-diaminopimelate. The polypeptide is LL-diaminopimelate aminotransferase (Leptospira biflexa serovar Patoc (strain Patoc 1 / Ames)).